Here is a 200-residue protein sequence, read N- to C-terminus: MITVILIFSAYLLGSISFAVVASWLFKLPDPRSYGSGNPGATNVLRTGKKVAAAVTLLGDAGKGWVAVVVAKYLGNVLGLGDEVIASAALAVFLGHLFPIFLAFKGGKGVATSAGILLGLNLWLGILAILTWIIVALVSRISSLSALLSALLAPLYTYFLLQKEMLTITVLIISILLILKHQSNIANLIAGKETRIGKSS.

A run of 5 helical transmembrane segments spans residues 1 to 21, 51 to 71, 84 to 104, 116 to 136, and 159 to 179; these read MITVILIFSAYLLGSISFAVV, VAAAVTLLGDAGKGWVAVVVA, VIASAALAVFLGHLFPIFLAF, ILLGLNLWLGILAILTWIIVA, and FLLQKEMLTITVLIISILLIL.

It belongs to the PlsY family. As to quaternary structure, probably interacts with PlsX.

Its subcellular location is the cell inner membrane. It catalyses the reaction an acyl phosphate + sn-glycerol 3-phosphate = a 1-acyl-sn-glycero-3-phosphate + phosphate. It participates in lipid metabolism; phospholipid metabolism. Functionally, catalyzes the transfer of an acyl group from acyl-phosphate (acyl-PO(4)) to glycerol-3-phosphate (G3P) to form lysophosphatidic acid (LPA). This enzyme utilizes acyl-phosphate as fatty acyl donor, but not acyl-CoA or acyl-ACP. This chain is Glycerol-3-phosphate acyltransferase, found in Nitrosomonas eutropha (strain DSM 101675 / C91 / Nm57).